The following is a 329-amino-acid chain: Fructose-1,6-bisphosphatase class 1 (329 aa).

The Mg(2+) site is built by Glu84, Asp103, Leu105, and Asp106. Substrate is bound by residues 106–109 (DGSS), Asn196, and Lys262. Glu268 is a binding site for Mg(2+).

Belongs to the FBPase class 1 family. As to quaternary structure, homotetramer. Mg(2+) serves as cofactor.

It localises to the cytoplasm. The catalysed reaction is beta-D-fructose 1,6-bisphosphate + H2O = beta-D-fructose 6-phosphate + phosphate. It participates in carbohydrate biosynthesis; gluconeogenesis. The protein is Fructose-1,6-bisphosphatase class 1 of Shewanella sediminis (strain HAW-EB3).